A 242-amino-acid chain; its full sequence is Small ribosomal subunit protein uS3 (242 aa).

Residues 39 to 110 enclose the KH type-2 domain; it reads IRKFIHKKYG…QVRINVVEVE (72 aa). Residues 221-242 form a disordered region; that stretch reads GASPRRRASRRPQQFEDRSNEG. Over residues 233 to 242 the composition is skewed to basic and acidic residues; the sequence is QQFEDRSNEG.

This sequence belongs to the universal ribosomal protein uS3 family. Part of the 30S ribosomal subunit. Forms a tight complex with proteins S10 and S14.

Functionally, binds the lower part of the 30S subunit head. Binds mRNA in the 70S ribosome, positioning it for translation. This chain is Small ribosomal subunit protein uS3, found in Parasynechococcus marenigrum (strain WH8102).